The following is a 1003-amino-acid chain: X-linked retinitis pigmentosa GTPase regulator (1003 aa).

6 RCC1 repeats span residues 54–105, 106–158, 159–208, 209–261, 262–313, and 314–367; these read NKLY…STEG, GKVY…LTED, GELF…VTTE, GQLY…LTEK, AVYT…ITDM, and GLMY…FATP. Position 418 is a phosphoserine (Ser418). The tract at residues 460–495 is disordered; sequence TPEKEGLTQPEPDYFRDNMAKGKETDNSSATDSESL. Positions 472-485 are enriched in basic and acidic residues; it reads DYFRDNMAKGKETD. Residues 486–495 are compositionally biased toward polar residues; that stretch reads NSSATDSESL. Ser520 is subject to Phosphoserine. Disordered stretches follow at residues 625–657, 691–760, 794–932, and 968–1003; these read FKAI…LAEM, ESKD…TDQN, LSEI…DVKK, and AFKG…CTIL. Residues 693 to 715 show a composition bias toward basic and acidic residues; the sequence is KDFVKDSRRNKQDVIFDSERESI. 2 stretches are compositionally biased toward acidic residues: residues 716–726 and 797–821; these read EEPDSYLEGES and IPEE…EANE. The segment covering 827–848 has biased composition (basic and acidic residues); that stretch reads AGKEEKEIEILSDDLTDRAEDH. Residues 849–867 are compositionally biased toward acidic residues; it reads EFSEDEEPEDMAEELDEDL. The span at 882–896 shows a compositional bias: basic and acidic residues; the sequence is SLKKDETTKQEKRAI. Over residues 913–924 the composition is skewed to low complexity; sequence SSSSEVLNDSES. Residues 978–989 are compositionally biased toward polar residues; sequence QNHMGQNHQDTS. Position 1000 is a cysteine methyl ester (Cys1000). Residue Cys1000 is the site of S-geranylgeranyl cysteine attachment. The propeptide at 1001 to 1003 is removed in mature form; that stretch reads TIL.

As to quaternary structure, interacts with PDE6D. Interacts with RPGRIP1. Interacts with RPGRIP1L. PDE6D, RPGRIP1 and RPGRIP1L may compete for the same binding sites. Interacts with NPM1. Interacts with SMC1A and SMC3. Interacts with CEP290. Interacts with WHRN. Interacts with SPATA7. Interacts with RAB37 and RAB8A (in GDP-bound forms); functions as GEF for RAB37 and RAB8A. Post-translationally, prenylated. As to expression, isoform 1 is expressed exclusively in testis. Isoforms 2, 3 and 4 are widely expressed.

The protein resides in the golgi apparatus. It is found in the cell projection. The protein localises to the cilium. It localises to the cytoplasm. Its subcellular location is the cytoskeleton. The protein resides in the cilium basal body. It is found in the microtubule organizing center. The protein localises to the centrosome. It localises to the cilium axoneme. Its subcellular location is the flagellum axoneme. Acts as a guanine-nucleotide releasing factor (GEF) for RAB8A and RAB37 by promoting the conversion of inactive RAB-GDP to the active form RAB-GTP. GEF activity towards RAB8A may facilitate ciliary trafficking by modulating ciliary intracellular localization of RAB8A. GEF activity towards RAB37 maintains autophagic homeostasis and retinal function. Involved in photoreceptor integrity. May control cilia formation by regulating actin stress filaments and cell contractility. May be involved in microtubule organization and regulation of transport in primary cilia. May play a critical role in spermatogenesis and in intraflagellar transport processes. This Canis lupus familiaris (Dog) protein is X-linked retinitis pigmentosa GTPase regulator (RPGR).